We begin with the raw amino-acid sequence, 375 residues long: Glutamate 5-kinase (375 aa).

Residue K17 participates in ATP binding. Residues S57, D144, and N156 each contribute to the substrate site. 176–177 (TD) provides a ligand contact to ATP. A PUA domain is found at 283-361 (KGRLWLDTGA…HQIEQILGYV (79 aa)).

It belongs to the glutamate 5-kinase family.

The protein resides in the cytoplasm. The catalysed reaction is L-glutamate + ATP = L-glutamyl 5-phosphate + ADP. It participates in amino-acid biosynthesis; L-proline biosynthesis; L-glutamate 5-semialdehyde from L-glutamate: step 1/2. Its function is as follows. Catalyzes the transfer of a phosphate group to glutamate to form L-glutamate 5-phosphate. This chain is Glutamate 5-kinase, found in Nitrosococcus oceani (strain ATCC 19707 / BCRC 17464 / JCM 30415 / NCIMB 11848 / C-107).